The sequence spans 243 residues: Leucyl/phenylalanyl-tRNA--protein transferase (243 aa).

It belongs to the L/F-transferase family.

It is found in the cytoplasm. It carries out the reaction N-terminal L-lysyl-[protein] + L-leucyl-tRNA(Leu) = N-terminal L-leucyl-L-lysyl-[protein] + tRNA(Leu) + H(+). The catalysed reaction is N-terminal L-arginyl-[protein] + L-leucyl-tRNA(Leu) = N-terminal L-leucyl-L-arginyl-[protein] + tRNA(Leu) + H(+). The enzyme catalyses L-phenylalanyl-tRNA(Phe) + an N-terminal L-alpha-aminoacyl-[protein] = an N-terminal L-phenylalanyl-L-alpha-aminoacyl-[protein] + tRNA(Phe). Its function is as follows. Functions in the N-end rule pathway of protein degradation where it conjugates Leu, Phe and, less efficiently, Met from aminoacyl-tRNAs to the N-termini of proteins containing an N-terminal arginine or lysine. The polypeptide is Leucyl/phenylalanyl-tRNA--protein transferase (Xylella fastidiosa (strain 9a5c)).